The primary structure comprises 208 residues: MGVTVVSHPLVQHKLTIMRKKETSTASFRRLLKEISLLLCYEVTRNLELTTMSIETPLMPMEAPVLEGKKLVFASILRAGNGLLEGMLDLVPAARVAHIGLYRDHDTLQPIEYYFKAPEDIVNRLVIVVDPMLATANSAIAAIDKLKERGATNIRFLCLLAAPEGIERFTKAHPDVEVFTASIDERLDEKGYIVPGLGDAGDRMYGTK.

5-phospho-alpha-D-ribose 1-diphosphate-binding positions include arginine 78, arginine 103, and 130–138 (DPMLATANS). Uracil is bound by residues isoleucine 193 and 198–200 (GDA). Aspartate 199 is a 5-phospho-alpha-D-ribose 1-diphosphate binding site.

The protein belongs to the UPRTase family. It depends on Mg(2+) as a cofactor.

The enzyme catalyses UMP + diphosphate = 5-phospho-alpha-D-ribose 1-diphosphate + uracil. It participates in pyrimidine metabolism; UMP biosynthesis via salvage pathway; UMP from uracil: step 1/1. Its activity is regulated as follows. Allosterically activated by GTP. Functionally, catalyzes the conversion of uracil and 5-phospho-alpha-D-ribose 1-diphosphate (PRPP) to UMP and diphosphate. The protein is Uracil phosphoribosyltransferase of Brucella ovis (strain ATCC 25840 / 63/290 / NCTC 10512).